Consider the following 339-residue polypeptide: UDP-N-acetylglucosamine--N-acetylmuramyl-(pentapeptide) pyrophosphoryl-undecaprenol N-acetylglucosamine transferase (339 aa).

UDP-N-acetyl-alpha-D-glucosamine is bound by residues 11 to 13, asparagine 127, arginine 170, serine 188, isoleucine 235, and glutamine 280; that span reads TGG.

The protein belongs to the glycosyltransferase 28 family. MurG subfamily.

It localises to the cell inner membrane. It catalyses the reaction di-trans,octa-cis-undecaprenyl diphospho-N-acetyl-alpha-D-muramoyl-L-alanyl-D-glutamyl-meso-2,6-diaminopimeloyl-D-alanyl-D-alanine + UDP-N-acetyl-alpha-D-glucosamine = di-trans,octa-cis-undecaprenyl diphospho-[N-acetyl-alpha-D-glucosaminyl-(1-&gt;4)]-N-acetyl-alpha-D-muramoyl-L-alanyl-D-glutamyl-meso-2,6-diaminopimeloyl-D-alanyl-D-alanine + UDP + H(+). It participates in cell wall biogenesis; peptidoglycan biosynthesis. Its function is as follows. Cell wall formation. Catalyzes the transfer of a GlcNAc subunit on undecaprenyl-pyrophosphoryl-MurNAc-pentapeptide (lipid intermediate I) to form undecaprenyl-pyrophosphoryl-MurNAc-(pentapeptide)GlcNAc (lipid intermediate II). This chain is UDP-N-acetylglucosamine--N-acetylmuramyl-(pentapeptide) pyrophosphoryl-undecaprenol N-acetylglucosamine transferase, found in Thermotoga petrophila (strain ATCC BAA-488 / DSM 13995 / JCM 10881 / RKU-1).